We begin with the raw amino-acid sequence, 250 residues long: Probable aquaporin TIP-type RB7-18C (250 aa).

Helical transmembrane passes span 20–42 (AYVA…AIAY) and 55–77 (GLVA…AANI). The NPA 1 motif lies at 83-85 (NPA). Transmembrane regions (helical) follow at residues 97–119 (TILT…CLLL), 140–162 (FQGV…ATAA), and 172–194 (IAPI…FSGG). An NPA 2 motif is present at residues 197–199 (NPA). A helical membrane pass occupies residues 215 to 237 (WIYWAGPLIGGGLAGFIYGDVFI).

It belongs to the MIP/aquaporin (TC 1.A.8) family. TIP (TC 1.A.8.10) subfamily. In terms of tissue distribution, roots.

The protein resides in the vacuole membrane. In terms of biological role, channel protein in tonoplast. These proteins may allow the diffusion of amino acids and/or peptides from the vacuolar compartment to the cytoplasm. The polypeptide is Probable aquaporin TIP-type RB7-18C (Nicotiana tabacum (Common tobacco)).